The chain runs to 187 residues: Corticoliberin (187 aa).

The first 19 residues, 1 to 19, serve as a signal peptide directing secretion; sequence MRLRLLVSAGMLLVALSSC. A propeptide spanning residues 20–144 is cleaved from the precursor; it reads LPCRALLSRG…HQGALERERR (125 aa). Disordered regions lie at residues 75 to 94 and 114 to 146; these read AARLSPNSTPLTAGRGSRPS and QRSLDSRAEPAERGAEDALGGHQGALERERRSE. Positions 117 to 129 are enriched in basic and acidic residues; sequence LDSRAEPAERGAE. Isoleucine 185 bears the Isoleucine amide mark.

The protein belongs to the sauvagine/corticotropin-releasing factor/urotensin I family. As to quaternary structure, interacts (via C-terminus) with CRFR1 (via N-terminal extracellular domain). In terms of tissue distribution, expressed in parvocellular paraventricular nucleus of the hypothalamus and in medial accessory olivary nucleus.

It is found in the secreted. Its function is as follows. Hormone regulating the release of corticotropin from pituitary gland. Induces NLRP6 in intestinal epithelial cells, hence may influence gut microbiota profile. This chain is Corticoliberin (Crh), found in Mus musculus (Mouse).